Consider the following 285-residue polypeptide: Probable endonuclease 4 (285 aa).

Positions 69, 109, 145, 179, 182, 216, 229, 231, and 261 each coordinate Zn(2+).

The protein belongs to the AP endonuclease 2 family. It depends on Zn(2+) as a cofactor.

The catalysed reaction is Endonucleolytic cleavage to 5'-phosphooligonucleotide end-products.. Its function is as follows. Endonuclease IV plays a role in DNA repair. It cleaves phosphodiester bonds at apurinic or apyrimidinic (AP) sites, generating a 3'-hydroxyl group and a 5'-terminal sugar phosphate. The chain is Probable endonuclease 4 from Escherichia coli O127:H6 (strain E2348/69 / EPEC).